We begin with the raw amino-acid sequence, 307 residues long: MINKDIYQALQQLIPNEKIKVDEPLKRYTYTKTGGNADFYITPTKNEEVQAVVKYAYQNEIPVTYLGNGSNIIIREGGIRGIVISLLSLDHIEVSDDAIIAGSGAAIIDVSRVALDYALTGLEFACGIPGSIGGAVYMNAGAYGGEVKDCIDYALCVNEQGSLIKLTTKELELDYRNSIIQKEHLVVLEAAFTLAPGKMTEIQAKMDDLTERRESKQPLEYPSCGSVFQRPPGHFAGKLIQDSNLQGHRIGGVEVSTKHAGFMVNVDNGTATDYENLIHYVQKTVKEKFGIELNREVRIIGEHPKES.

Residues 33–197 (TGGNADFYIT…LEAAFTLAPG (165 aa)) enclose the FAD-binding PCMH-type domain. Residue Arg176 is part of the active site. Ser226 acts as the Proton donor in catalysis. Glu296 is an active-site residue.

It belongs to the MurB family. The cofactor is FAD.

It localises to the cytoplasm. It carries out the reaction UDP-N-acetyl-alpha-D-muramate + NADP(+) = UDP-N-acetyl-3-O-(1-carboxyvinyl)-alpha-D-glucosamine + NADPH + H(+). The protein operates within cell wall biogenesis; peptidoglycan biosynthesis. In terms of biological role, cell wall formation. This is UDP-N-acetylenolpyruvoylglucosamine reductase from Staphylococcus aureus (strain COL).